We begin with the raw amino-acid sequence, 323 residues long: MNSKIQKMELNDGHSIPVLGFGTYATEENLRKKSMESTKIAIDVGFRHIDCSHLYQNEEEIGQAIVSKIEDGTVKREDIFYTSKLWSTSHRPELVRPSLENSLRKLNLDYVDLYLIHFPVSLKPGDELLPQDEHGNLILDTVDLCDTWEAMEKCKDAGLAKSIGVSNFNRRQLEKILNKPGLKHRPVCNQVECHLYLNQSKLLAYCKMNDIVLVAYGALGTQRYKYCINEDTPVLLDDPILCTMAKKYKRTPALIALRYQLERGIVTLVKSFNEERIRENLQVFDFQLASDDMEILDNLDRNLRYFPANMFKAHPNFPFSDEY.

NADP(+)-binding positions include 20–24 and Asp-50; that span reads GFGTY. Tyr-55 functions as the Proton donor in the catalytic mechanism. Substrate is bound at residue His-117. Residues 166-167, Gln-190, 216-221, and 270-280 contribute to the NADP(+) site; these read SN, YGALGT, and KSFNEERIREN.

Belongs to the aldo/keto reductase family. In terms of assembly, monomer. Post-translationally, the N-terminus is blocked. Corpus luteum (large luteal cells).

The protein resides in the cytoplasm. The enzyme catalyses (17R,20S)-17,20-dihydroxypregn-4-en-3-one + NADP(+) = 17alpha-hydroxyprogesterone + NADPH + H(+). The catalysed reaction is (17R,20S)-17,20-dihydroxypregn-4-en-3-one + NAD(+) = 17alpha-hydroxyprogesterone + NADH + H(+). Its function is as follows. Catalyzes the conversion of progesterone into 20-alpha-dihydroprogesterone (20 alpha-OHP). The chain is Aldo-keto reductase family 1 member C18 (Akr1c18) from Rattus norvegicus (Rat).